The chain runs to 575 residues: MQGPSLSQLVLVLMGALLEAGTPREEVSSTPALPREPRTGTEGLIFHWDWNWPPPGAWPPGGPQDPLCLVTLNGTPGNGSSPFLWVVGTLSSYEQAFLEAVRHARWGPQDLANFGLCPPSLRQAALPLLQQLQAWLGEPRGQRLVVLHLEEVSWEPTPLLKFQEPLPGEASPLELALLVLYPGPGPEVTVTGAGLPGAQSLCPTRDSGFLALAVDRPERAWRGSGLALTLRRRGNGASLSTAQLQALLFGADSRCFTRMTPALLLLPPQGPVPMPAHGRVDSMPFPQPRLSPEPEEPLPSTDPFLETLTRLVRALRGPPARIPPPSLALDPGALAGFPQGQVNLSDPAALERLLNSEEPLLLLLPPPTAVTAGVPAPLQGPVTEMWASSLARRVATEFQSAAAELRGFPGLPPTATLLLARLLALCPGDRGDPGGPLRAVLLLKALQGLRTEWRWRERSGPARAQRSAGTAVSNGPCALRELSVDLRAERSVLIPETYQANNCQGTCGWPQSDRNPRYGNHVVLLLKMQARGAALARPPCCVPTAYAGKLLISLSEERISAHHVPNMVATECGCR.

The signal sequence occupies residues 1-20; the sequence is MQGPSLSQLVLVLMGALLEA. A propeptide spanning residues 21 to 466 is cleaved from the precursor; the sequence is GTPREEVSST…ERSGPARAQR (446 aa). Asparagine 78 and asparagine 343 each carry an N-linked (GlcNAc...) asparagine glycan. Intrachain disulfides connect cysteine 477–cysteine 541, cysteine 503–cysteine 572, and cysteine 507–cysteine 574.

The protein belongs to the TGF-beta family. In terms of assembly, homodimer; disulfide-linked. In terms of processing, preproprotein is proteolytically processed to generate N- and C-terminal cleavage products that homodimerize and associate to form a biologically active non-covalent complex. Binding of the non-covalent complex to AMHR2 induces dissociation of the pro-region from the mature C-terminal dimer. The N-terminal portion of the protein, despite having no intrinsic activity, has the role of amplifying the activity of the C-terminus. In terms of tissue distribution, detected in fetal Sertoli cells. Expressed in granulosa cells of growing follicles but also in theca cells of preovulatory follicles and corpora lutea (at protein level).

It is found in the secreted. Functionally, plays an important role in several reproductive functions. Induces Muellerian duct regression during male fetal sexual differentiation and plays a role in Leydig cell differentiation and function. In female acts as a negative regulator of the primordial to primary follicle transition and decreases FSH sensitivity of growing follicles. AMH signals by binding to a specific type-II receptor, AMHR2, that heterodimerizes with type-I receptors (ACVR1 and BMPR1A), and recruiting SMAD proteins that are translocated to the nucleus to regulate target gene expression. The polypeptide is Muellerian-inhibiting factor (AMH) (Sus scrofa (Pig)).